We begin with the raw amino-acid sequence, 343 residues long: KRR1 small subunit processome component homolog (343 aa).

The KH domain occupies 125-193; that stretch reads DIIKIGNLVH…VRDIVVETMN (69 aa). Residues 232-245 show a composition bias toward basic residues; the sequence is NISKRKQPKVKKAK. The segment at 232–343 is disordered; it reads NISKRKQPKV…KLLKANKKKV (112 aa). Residues 270–302 are a coiled coil; sequence FLNKEQKQAKRQQERSAKQADAAKRQDERRNKD. Residues 271–302 show a composition bias toward basic and acidic residues; it reads LNKEQKQAKRQQERSAKQADAAKRQDERRNKD. Basic residues predominate over residues 331-343; it reads LKAKLLKANKKKV.

The protein belongs to the KRR1 family. In terms of assembly, monomer. Component of the ribosomal small subunit (SSU) processome.

Its subcellular location is the nucleus. The protein resides in the nucleolus. Functionally, required for 40S ribosome biogenesis. Involved in nucleolar processing of pre-18S ribosomal RNA and ribosome assembly. Binds to RNA. Required for female germline development, cell viability during eye development and for survival of dividing cells and epithelial cells during early wing disk development. This chain is KRR1 small subunit processome component homolog, found in Drosophila ananassae (Fruit fly).